The primary structure comprises 211 residues: Synaptosomal-associated protein 23 (211 aa).

N-acetylmethionine is present on methionine 1. Residues serine 5, serine 6, serine 20, serine 23, and serine 34 each carry the phosphoserine modification. The t-SNARE coiled-coil homology 1 domain occupies 14-76; that stretch reads HQITDESLES…RETEKTLTEL (63 aa). Positions 23–76 form a coiled coil; sequence STRRILGLAIESQDAGIKTITMLDEQKEQLNRIEEGLDQINKDMRETEKTLTEL. Residues cysteine 79, cysteine 80, cysteine 83, cysteine 85, and cysteine 87 are each lipidated (S-palmitoyl cysteine). Serine 110 is modified (phosphoserine). Residue cysteine 112 is the site of S-palmitoyl cysteine attachment. Residues 146–208 form the t-SNARE coiled-coil homology 2 domain; it reads DAREDEMEEN…DIANARAKKL (63 aa). A Phosphoserine modification is found at serine 161.

The protein belongs to the SNAP-25 family. Homotetramer (via coiled-coil domain), also forms heterotetramers with STX4 and VAMP3. Found in a complex with VAMP8 and STX1A. Found in a complex with VAMP8 and STX4 in pancreas. Interacts simultaneously with SNAPIN and SYN4. Interacts with STX1A. Interacts with STX12. Interacts tightly to multiple syntaxins and synaptobrevins/VAMPs. Interacts with ZDHHC13 (via ANK repeats). Interacts with ZDHHC17 (via ANK repeats). In terms of tissue distribution, ubiquitous. Highest levels where found in placenta.

It is found in the cell membrane. Its subcellular location is the synapse. The protein resides in the synaptosome. Its function is as follows. Essential component of the high affinity receptor for the general membrane fusion machinery and an important regulator of transport vesicle docking and fusion. This chain is Synaptosomal-associated protein 23 (SNAP23), found in Homo sapiens (Human).